Reading from the N-terminus, the 187-residue chain is UPF0301 protein YPO0936/y3322/YP_3506 (187 aa).

This sequence belongs to the UPF0301 (AlgH) family.

The sequence is that of UPF0301 protein YPO0936/y3322/YP_3506 from Yersinia pestis.